Here is a 198-residue protein sequence, read N- to C-terminus: Inner membrane-spanning protein YciB (198 aa).

5 helical membrane passes run 36 to 56 (IYSA…ALFI), 67 to 87 (LTLI…SETF), 90 to 110 (WKAP…HFIG), 135 to 155 (IAWI…AFTF), and 162 to 182 (FKVF…GIYL).

This sequence belongs to the YciB family.

It is found in the cell inner membrane. Plays a role in cell envelope biogenesis, maintenance of cell envelope integrity and membrane homeostasis. In Pseudomonas fluorescens (strain Pf0-1), this protein is Inner membrane-spanning protein YciB.